A 123-amino-acid chain; its full sequence is uncharacterized protein (123 aa).

This sequence to insertion element IS1016 transposase.

This is an uncharacterized protein from Haemophilus influenzae (strain ATCC 51907 / DSM 11121 / KW20 / Rd).